The chain runs to 180 residues: Inorganic pyrophosphatase (180 aa).

3 residues coordinate substrate: lysine 30, arginine 44, and tyrosine 56. Positions 66, 71, and 103 each coordinate Mg(2+). Tyrosine 142 contacts substrate.

It belongs to the PPase family. As to quaternary structure, homohexamer. Mg(2+) serves as cofactor.

The protein resides in the cytoplasm. The catalysed reaction is diphosphate + H2O = 2 phosphate + H(+). In terms of biological role, catalyzes the hydrolysis of inorganic pyrophosphate (PPi) forming two phosphate ions. The sequence is that of Inorganic pyrophosphatase from Buchnera aphidicola subsp. Schizaphis graminum (strain Sg).